The chain runs to 423 residues: NDP-N-acetyl-D-galactosaminuronic acid dehydrogenase (423 aa).

NAD(+) is bound at residue 11 to 28; it reads TISVVGLGYIGLPTATVL. Lys-218 functions as the Proton donor/acceptor in the catalytic mechanism. Cys-272 functions as the Nucleophile in the catalytic mechanism.

This sequence belongs to the UDP-glucose/GDP-mannose dehydrogenase family.

Its function is as follows. Probably involved in the synthesis of sugar components of EPS I, by converting NDP-N-acetyl-D-galactosamine into NDP-N-acetyl-D-galactosaminuronic acid. This is NDP-N-acetyl-D-galactosaminuronic acid dehydrogenase (epsD) from Ralstonia nicotianae (strain ATCC BAA-1114 / GMI1000) (Ralstonia solanacearum).